We begin with the raw amino-acid sequence, 1050 residues long: Antibiotic efflux pump membrane transporter ArpB (1050 aa).

12 consecutive transmembrane segments (helical) span residues 10–30 (IFAWVIALVIMLVGALSILKL), 339–359 (GVIHTLIEAVVLVFLVMYLFL), 370–390 (MTVPVVLLGTFGILAAAGFSI), 393–413 (LTMFAMVLAIGLLVDDAIVVV), 440–460 (GALVGIALVLSAVLLPMAFFG), 472–492 (ITIVSAMGLSVLVALIFTPAL), 539–559 (VPFLLGYALIVVGMIWLFARI), 871–891 (MPALFALSVLFVFLCLAALYE), 893–913 (WSIPIAVVLVVPLGIIGALIA), 923–943 (VYFLVGLLTTIGLAAKNAILI), 972–992 (IIMTSLAFILGVVPLTIASGA), and 1004–1024 (VIGGMISATVLAIFWVPLFFV).

This sequence belongs to the resistance-nodulation-cell division (RND) (TC 2.A.6) family.

The protein localises to the cell inner membrane. Functionally, the inner membrane transporter component of an antibiotic efflux pump. Confers resistance to numerous structurally unrelated antibiotics such as carbenicillin, chloramphenicol, erythromycin, novobiocin, streptomycin and tetracycline. Is not involved in organic solvent efflux. This Pseudomonas putida (Arthrobacter siderocapsulatus) protein is Antibiotic efflux pump membrane transporter ArpB (arpB).